We begin with the raw amino-acid sequence, 56 residues long: UPF0391 membrane protein HCH_04387 (56 aa).

A run of 2 helical transmembrane segments spans residues 6–26 (IVFFVVALVAGVLGFTGIAAA) and 30–50 (IAQILFVIFLVLFVISIIAGG).

The protein belongs to the UPF0391 family.

The protein resides in the cell membrane. This chain is UPF0391 membrane protein HCH_04387, found in Hahella chejuensis (strain KCTC 2396).